We begin with the raw amino-acid sequence, 148 residues long: uncharacterized protein (148 aa).

Transmembrane regions (helical) follow at residues 20 to 42 (YYSK…IANY), 52 to 74 (YFLM…VRCY), and 118 to 135 (IIRY…CTYI).

The protein resides in the cell membrane. This is an uncharacterized protein from Rickettsia prowazekii (strain Madrid E).